The sequence spans 450 residues: MPLIIPSNDIYISIISKYVAIVIFLIFVIIMFNNITHHLTQPYIDEIFHLRQCQTYCQYNFHHWDNKITTPPGLYILGFIYSEGIKILTRSSSTGGGGGGGHLTCFNDNVLRSINLIGGVVILPRILQQFHNGWSKNSKNQFFWSINIISQPLLFTYYFLFYTDVSSTILIILSLGLINYKLLQYPMLSALVGFMSLWFRQTNIIWIAFIASIFIDRQIKIKTGVIDRIRQFIMKSLTNWNKLLGYIVNIILFVIFLKLNGGITLGDNDNHQIELHIVQVFYCFTFITFFTIPNWLNKSTIKKYYNFIINHIILNLVIGLIIWYIMENFTIVHPFLLADNRHYAFYIYKRLLSQSYLKPLILMAYHFSSFQIISSLIKGGQLSFIGIFSYLIAVGLTLIPSPLFEPRYYITPLIIFNLYINHPHNLLEFIWLNSINLITSYIFLHKGIIW.

The chain crosses the membrane as a helical span at residues 12 to 32 (ISIISKYVAIVIFLIFVIIMF). An N-linked (GlcNAc...) asparagine glycan is attached at Asn-34. 4 helical membrane-spanning segments follow: residues 158-178 (YFLF…LGLI), 190-210 (ALVG…IAFI), 243-263 (LLGY…NGGI), and 273-293 (IELH…FTIP). An N-linked (GlcNAc...) asparagine glycan is attached at Asn-297. 4 consecutive transmembrane segments (helical) span residues 312-332 (IILN…FTIV), 357-377 (LKPL…SSLI), 384-404 (FIGI…SPLF), and 429-449 (FIWL…KGII).

Belongs to the ALG10 glucosyltransferase family.

The protein resides in the endoplasmic reticulum membrane. The catalysed reaction is an alpha-D-Glc-(1-&gt;3)-alpha-D-Glc-(1-&gt;3)-alpha-D-Man-(1-&gt;2)-alpha-D-Man-(1-&gt;2)-alpha-D-Man-(1-&gt;3)-[alpha-D-Man-(1-&gt;2)-alpha-D-Man-(1-&gt;3)-[alpha-D-Man-(1-&gt;2)-alpha-D-Man-(1-&gt;6)]-alpha-D-Man-(1-&gt;6)]-beta-D-Man-(1-&gt;4)-beta-D-GlcNAc-(1-&gt;4)-alpha-D-GlcNAc-diphospho-di-trans,poly-cis-dolichol + a di-trans,poly-cis-dolichyl beta-D-glucosyl phosphate = a alpha-D-Glc-(1-&gt;2)-alpha-D-Glc-(1-&gt;3)-alpha-D-Glc-(1-&gt;3)-alpha-D-Man-(1-&gt;2)-alpha-D-Man-(1-&gt;2)-alpha-D-Man-(1-&gt;3)-[alpha-D-Man-(1-&gt;2)-alpha-D-Man-(1-&gt;3)-[alpha-D-Man-(1-&gt;2)-alpha-D-Man-(1-&gt;6)]-alpha-D-Man-(1-&gt;6)]-beta-D-Man-(1-&gt;4)-beta-D-GlcNAc-(1-&gt;4)-alpha-D-GlcNAc-diphospho-di-trans,poly-cis-dolichol + a di-trans,poly-cis-dolichyl phosphate + H(+). The protein operates within protein modification; protein glycosylation. Dol-P-Glc:Glc(2)Man(9)GlcNAc(2)-PP-Dol alpha-1,2-glucosyltransferase that operates in the biosynthetic pathway of dolichol-linked oligosaccharides, the glycan precursors employed in protein asparagine (N)-glycosylation. The assembly of dolichol-linked oligosaccharides begins on the cytosolic side of the endoplasmic reticulum membrane and finishes in its lumen. The sequential addition of sugars to dolichol pyrophosphate produces dolichol-linked oligosaccharides containing fourteen sugars, including two GlcNAcs, nine mannoses and three glucoses. Once assembled, the oligosaccharide is transferred from the lipid to nascent proteins by oligosaccharyltransferases. In the lumen of the endoplasmic reticulum, adds the third and last glucose residue from dolichyl phosphate glucose (Dol-P-Glc) onto the lipid-linked oligosaccharide intermediate Glc(2)Man(9)GlcNAc(2)-PP-Dol to produce Glc(3)Man(9)GlcNAc(2)-PP-Dol. The protein is Dol-P-Glc:Glc(2)Man(9)GlcNAc(2)-PP-Dol alpha-1,2-glucosyltransferase (DIE2) of Candida albicans (strain SC5314 / ATCC MYA-2876) (Yeast).